A 215-amino-acid chain; its full sequence is MGEAAVPPELDTFPAAKMAQTNPLPVPMGPWKITVYDQENFQGKRMEFTSACPNIMECGFDNIRSLKVECGAWVGYEHTGFCGQQFILERGEYPRWDAWSGSNAYHIERLMSFRPVCSANHKESKITVYEKDNFIGRQWEISDDYPSLQAMGWANNEVGSMKIPCGAWVCYQYPGYRGYQYVLEADHHGGDYKHWREWGSHAQTSQIQSIRRIQQ.

The interval M1–P30 is N-terminal arm. 2 consecutive Beta/gamma crystallin 'Greek key' domains span residues W31–C70 and G71–C117. Positions S118 to E123 are connecting peptide. 2 Beta/gamma crystallin 'Greek key' domains span residues S124–C165 and G166–Q214.

Belongs to the beta/gamma-crystallin family. As to quaternary structure, homo/heterodimer, or complexes of higher-order. The structure of beta-crystallin oligomers seems to be stabilized through interactions between the N-terminal arms.

In terms of biological role, crystallins are the dominant structural components of the vertebrate eye lens. This is Beta-crystallin A3 (CRYBA1) from Gallus gallus (Chicken).